A 356-amino-acid chain; its full sequence is Heparan sulfate 2-O-sulfotransferase 1 (356 aa).

Over 1–11 the chain is Cytoplasmic; sequence MGLLRIMLPPK. A helical; Signal-anchor for type II membrane protein membrane pass occupies residues 12 to 28; sequence LQLLAVLVFGVAVLFLE. A coiled-coil region spans residues 24–51; that stretch reads VLFLENQIQKLEESRGKLERAIARHEVR. The Lumenal portion of the chain corresponds to 29-356; it reads NQIQKLEESR…FYEKIYPKSN (328 aa). Positions 83, 84, 85, 86, 87, and 88 each coordinate adenosine 3',5'-bisphosphate. 2 N-linked (GlcNAc...) asparagine glycosylation sites follow: N108 and N127. Catalysis depends on residues H140 and H142. Adenosine 3',5'-bisphosphate-binding residues include R164 and S172. Disulfide bonds link C201/C209 and C222/C228. Y279, S285, T290, and K293 together coordinate adenosine 3',5'-bisphosphate.

It belongs to the sulfotransferase 3 family. In terms of assembly, homotrimer. As to expression, expressed in heart, limb, head and trunk. At stages 20 and 24, it is expressed in the most regions of the first and second pharyngeal arche. In both wing and leg buds, it is detected at the overlying ectoderm and mesenchyme throughout stages 21, 23 and 24.

The protein resides in the golgi apparatus membrane. In terms of biological role, catalyzes the transfer of a sulfo group from 3'-phospho-5'-adenylyl sulfate (PAPS) to the 2-OH position of iduronic acid (IdoA) or glucuronic acid (GlcA) within the heparan sulfate (HS) chain and participates in HS biosynthesis. The polypeptide is Heparan sulfate 2-O-sulfotransferase 1 (Gallus gallus (Chicken)).